Here is a 446-residue protein sequence, read N- to C-terminus: Tubulin beta-4 chain (446 aa).

Glutamine 11, glutamate 69, serine 138, glycine 142, threonine 143, glycine 144, asparagine 204, and asparagine 226 together coordinate GTP. Glutamate 69 contacts Mg(2+). A compositionally biased stretch (polar residues) spans 417-426 (DLVSEYQQYQ). The interval 417–446 (DLVSEYQQYQDATADEEGDYEDEDEALHDE) is disordered. Residues 429-446 (TADEEGDYEDEDEALHDE) are compositionally biased toward acidic residues.

The protein belongs to the tubulin family. Dimer of alpha and beta chains. A typical microtubule is a hollow water-filled tube with an outer diameter of 25 nm and an inner diameter of 15 nM. Alpha-beta heterodimers associate head-to-tail to form protofilaments running lengthwise along the microtubule wall with the beta-tubulin subunit facing the microtubule plus end conferring a structural polarity. Microtubules usually have 13 protofilaments but different protofilament numbers can be found in some organisms and specialized cells. Mg(2+) serves as cofactor.

The protein resides in the cytoplasm. It localises to the cytoskeleton. Functionally, tubulin is the major constituent of microtubules, a cylinder consisting of laterally associated linear protofilaments composed of alpha- and beta-tubulin heterodimers. Microtubules grow by the addition of GTP-tubulin dimers to the microtubule end, where a stabilizing cap forms. Below the cap, tubulin dimers are in GDP-bound state, owing to GTPase activity of alpha-tubulin. The protein is Tubulin beta-4 chain (TUBB4) of Eleusine indica (Goosegrass).